The following is a 310-amino-acid chain: Acetylglutamate kinase (310 aa).

Substrate is bound by residues 70 to 71 (GG), arginine 92, and asparagine 191.

The protein belongs to the acetylglutamate kinase family. ArgB subfamily.

The protein resides in the cytoplasm. It catalyses the reaction N-acetyl-L-glutamate + ATP = N-acetyl-L-glutamyl 5-phosphate + ADP. It functions in the pathway amino-acid biosynthesis; L-arginine biosynthesis; N(2)-acetyl-L-ornithine from L-glutamate: step 2/4. Its function is as follows. Catalyzes the ATP-dependent phosphorylation of N-acetyl-L-glutamate. This chain is Acetylglutamate kinase, found in Corynebacterium diphtheriae (strain ATCC 700971 / NCTC 13129 / Biotype gravis).